A 249-amino-acid polypeptide reads, in one-letter code: Proline-rich antigen (249 aa).

Pro residues-rich tracts occupy residues 1-20 (MTDQ…PPPG) and 38-87 (YPPP…PPGP). The interval 1-87 (MTDQPPPSGS…GAYAPPPPGP (87 aa)) is disordered. Residues 34–43 (LGSAYPPPTA) form a 1-1; approximate repeat. The segment at 34-85 (LGSAYPPPTAPPVGGSYPPPPPPGGSYPPPPPPGGSYPPPPPSTGAYAPPPP) is 5 X 10 AA tandem repeats of [PV]-G-G-S-Y-P-P-P-P-P. Tandem repeats lie at residues 46–55 (VGGSYPPPPP), 56–65 (PGGSYPPPPP), and 66–75 (PGGSYPPPPP). Residues 76–85 (STGAYAPPPP) form a 1-5; approximate repeat. The RDD domain maps to 99 to 242 (FWVTRVLAYV…KRQTLADKIM (144 aa)). Repeat copies occupy residues 101–123 (VTRV…IGML) and 134–156 (VTDI…IGML). The tract at residues 101–156 (VTRVLAYVIDNIPATVLLGIGMLIQTLTKQEACVTDITQYNVNQYCATQPTGIGML) is 2 X 23 AA approximate repeats. 3 helical membrane passes run 104-124 (VLAY…GMLI), 151-171 (TGIG…YLVW), and 212-232 (LAHF…LWDS).

It belongs to the mycobacterial Pra family.

The protein resides in the cell membrane. This Mycobacterium leprae (strain TN) protein is Proline-rich antigen (ag36).